A 357-amino-acid polypeptide reads, in one-letter code: Putative minor fimbrial subunit PmfE (357 aa).

Positions 1–28 are cleaved as a signal peptide; the sequence is MILNKKNIHSKSVMLFCAGIVSLMPLHA.

It is found in the fimbrium. The chain is Putative minor fimbrial subunit PmfE (pmfE) from Proteus mirabilis (strain HI4320).